The sequence spans 496 residues: Cytochrome P450 monooxygenase ausR (496 aa).

Residues 12–32 (IGLYILWTIPVLFVIFKLLAP) form a helical membrane-spanning segment. C435 serves as a coordination point for heme.

Belongs to the cytochrome P450 family. Heme serves as cofactor.

The protein resides in the membrane. Its pathway is secondary metabolite biosynthesis; terpenoid biosynthesis. Functionally, cytochrome P450 monooxygenase; part of the gene cluster B that mediates the biosynthesis of the fungal meroterpenoid acetoxydehydroaustin. The first step of the pathway is the synthesis of 3,5-dimethylorsellinic acid by the polyketide synthase ausA. 3,5-dimethylorsellinic acid is then prenylated by the polyprenyl transferase ausN. Further epoxidation by the FAD-dependent monooxygenase ausM and cyclization by the probable terpene cyclase ausL lead to the formation of protoaustinoid A. Protoaustinoid A is then oxidized to spiro-lactone preaustinoid A3 by the combined action of the FAD-binding monooxygenases ausB and ausC, and the dioxygenase ausE. Acid-catalyzed keto-rearrangement and ring contraction of the tetraketide portion of preaustinoid A3 by ausJ lead to the formation of preaustinoid A4. The aldo-keto reductase ausK, with the help of ausH, is involved in the next step by transforming preaustinoid A4 into isoaustinone which is in turn hydroxylated by the P450 monooxygenase ausI to form austinolide. The cytochrome P450 monooxygenase ausG then modifies austinolide to austinol. Austinol is further acetylated to austin by the O-acetyltransferase ausP, which spontaneously changes to dehydroaustin. The cytochrome P450 monooxygenase then converts dehydroaustin is into 7-dehydrodehydroaustin. The hydroxylation catalyzed by ausR permits the second O-acetyltransferase ausQ to add an additional acetyl group to the molecule, leading to the formation of acetoxydehydroaustin. Due to genetic rearrangements of the clusters and the subsequent loss of some enzymes, the end product of the Penicillium brasilianum austinoid biosynthesis clusters is acetoxydehydroaustin. In Penicillium brasilianum, this protein is Cytochrome P450 monooxygenase ausR.